A 288-amino-acid chain; its full sequence is RanBP2-type zinc finger protein At1g67325 (288 aa).

Positions 1–11 are enriched in polar residues; it reads MSQVDNRNSSA. 5 disordered regions span residues 1–24, 52–77, 176–198, 222–248, and 265–288; these read MSQV…RRED, PADH…GAYL, MPRP…DNDW, PKPG…WKCD, and NCGA…ENDQ. Positions 15–24 are enriched in basic and acidic residues; that stretch reads ARTDGGRRED. 3 consecutive RanBP2-type zinc fingers follow at residues 22 to 53, 194 to 225, and 241 to 272; these read REDD…PRPA, RDND…PKPG, and PEGS…DKPG. Positions 181 to 197 are enriched in basic and acidic residues; that stretch reads FYPDEKSQKRDSTRDND. The span at 223 to 241 shows a compositional bias: polar residues; that stretch reads KPGSQQGGSSDKISKQNAP. Residue serine 278 is modified to Phosphoserine.

The protein is RanBP2-type zinc finger protein At1g67325 of Arabidopsis thaliana (Mouse-ear cress).